The following is a 256-amino-acid chain: Floral homeotic protein APETALA 1 (256 aa).

The MADS-box domain maps to 1–61; it reads MGRGRVQLKR…GKLFEYSTDS (61 aa). The region spanning 88–178 is the K-box domain; that stretch reads NTNWSMEYNR…SKQIKEREKI (91 aa). Positions 184–206 are disordered; sequence EQWDQQNHGHNMPPPPPPQQHQI.

In terms of assembly, homodimer capable of binding to CArG-box sequences.

Its subcellular location is the nucleus. Its function is as follows. Transcription factor that promotes early floral meristem identity in synergy with LEAFY. Displays a redundant function with CAULIFLOWER in the up-regulation of LEAFY. Required subsequently for the transition of an inflorescence meristem into a floral meristem, and for the normal development of sepals and petals in flowers. Regulates positively B class homeotic proteins. This is Floral homeotic protein APETALA 1 (AP1) from Arabidopsis lyrata subsp. lyrata (Lyre-leaved rock-cress).